The sequence spans 408 residues: Tripartite motif-containing protein 59 (408 aa).

An RING-type zinc finger spans residues 10-60 (CSICYSLFEDPRVLPCSHTFCRSCLEGVIQLSSNFSIWRPLRVPLKCPNCR). The segment at 92 to 134 (SDVATCSEHYRQPLNVYCLLDKKLVCGHCLTIGKHNGHPIDDL) adopts a B box-type zinc-finger fold. Residues Cys-97, His-100, Cys-120, and His-126 each coordinate Zn(2+). A coiled-coil region spans residues 163 to 247 (LIEKLKEQKA…LNTSIQKEES (85 aa)). Residues 333–353 (ANPLSVTFIFTVIIAIAVLSF) form a helical membrane-spanning segment.

This sequence belongs to the TRIM/RBCC family. As to quaternary structure, interacts with ECSIT.

Its subcellular location is the endoplasmic reticulum membrane. Functionally, may serve as a multifunctional regulator for innate immune signaling pathways. The protein is Tripartite motif-containing protein 59 (TRIM59) of Gallus gallus (Chicken).